The chain runs to 82 residues: Phosphoribosylformylglycinamidine synthase subunit PurS (82 aa).

It belongs to the PurS family. As to quaternary structure, homodimer. Part of the FGAM synthase complex composed of 1 PurL, 1 PurQ and 2 PurS subunits.

It localises to the cytoplasm. The catalysed reaction is N(2)-formyl-N(1)-(5-phospho-beta-D-ribosyl)glycinamide + L-glutamine + ATP + H2O = 2-formamido-N(1)-(5-O-phospho-beta-D-ribosyl)acetamidine + L-glutamate + ADP + phosphate + H(+). Its pathway is purine metabolism; IMP biosynthesis via de novo pathway; 5-amino-1-(5-phospho-D-ribosyl)imidazole from N(2)-formyl-N(1)-(5-phospho-D-ribosyl)glycinamide: step 1/2. In terms of biological role, part of the phosphoribosylformylglycinamidine synthase complex involved in the purines biosynthetic pathway. Catalyzes the ATP-dependent conversion of formylglycinamide ribonucleotide (FGAR) and glutamine to yield formylglycinamidine ribonucleotide (FGAM) and glutamate. The FGAM synthase complex is composed of three subunits. PurQ produces an ammonia molecule by converting glutamine to glutamate. PurL transfers the ammonia molecule to FGAR to form FGAM in an ATP-dependent manner. PurS interacts with PurQ and PurL and is thought to assist in the transfer of the ammonia molecule from PurQ to PurL. The protein is Phosphoribosylformylglycinamidine synthase subunit PurS of Thermotoga maritima (strain ATCC 43589 / DSM 3109 / JCM 10099 / NBRC 100826 / MSB8).